Here is a 331-residue protein sequence, read N- to C-terminus: Probable tRNA pseudouridine synthase B (331 aa).

Over residues 1–15 the composition is skewed to basic and acidic residues; it reads MRCSQREVFVKREEP. The tract at residues 1 to 27 is disordered; sequence MRCSQREVFVKREEPTNPEWGKPPSQR. Catalysis depends on aspartate 71, which acts as the Nucleophile. The PUA domain occupies 238–313; the sequence is LPKIWVRDSA…AVVRTDRVVM (76 aa).

It belongs to the pseudouridine synthase TruB family. Type 2 subfamily.

It catalyses the reaction uridine(55) in tRNA = pseudouridine(55) in tRNA. Its function is as follows. Could be responsible for synthesis of pseudouridine from uracil-55 in the psi GC loop of transfer RNAs. This Pyrobaculum arsenaticum (strain DSM 13514 / JCM 11321 / PZ6) protein is Probable tRNA pseudouridine synthase B.